The primary structure comprises 194 residues: dTTP/UTP pyrophosphatase (194 aa).

The active-site Proton acceptor is the Asp-73.

It belongs to the Maf family. YhdE subfamily. It depends on a divalent metal cation as a cofactor.

It is found in the cytoplasm. It catalyses the reaction dTTP + H2O = dTMP + diphosphate + H(+). The enzyme catalyses UTP + H2O = UMP + diphosphate + H(+). Its function is as follows. Nucleoside triphosphate pyrophosphatase that hydrolyzes dTTP and UTP. May have a dual role in cell division arrest and in preventing the incorporation of modified nucleotides into cellular nucleic acids. This Clostridium botulinum (strain 657 / Type Ba4) protein is dTTP/UTP pyrophosphatase.